Consider the following 176-residue polypeptide: Ribosome maturation factor RimM (176 aa).

Residues 96 to 176 form the PRC barrel domain; the sequence is PEDEFYWRDL…QILVDWDPDF (81 aa).

This sequence belongs to the RimM family. Binds ribosomal protein uS19.

It localises to the cytoplasm. An accessory protein needed during the final step in the assembly of 30S ribosomal subunit, possibly for assembly of the head region. Essential for efficient processing of 16S rRNA. May be needed both before and after RbfA during the maturation of 16S rRNA. It has affinity for free ribosomal 30S subunits but not for 70S ribosomes. This is Ribosome maturation factor RimM from Shewanella woodyi (strain ATCC 51908 / MS32).